The following is a 423-amino-acid chain: Gamma-glutamyl phosphate reductase (423 aa).

It belongs to the gamma-glutamyl phosphate reductase family.

The protein localises to the cytoplasm. It catalyses the reaction L-glutamate 5-semialdehyde + phosphate + NADP(+) = L-glutamyl 5-phosphate + NADPH + H(+). It participates in amino-acid biosynthesis; L-proline biosynthesis; L-glutamate 5-semialdehyde from L-glutamate: step 2/2. Functionally, catalyzes the NADPH-dependent reduction of L-glutamate 5-phosphate into L-glutamate 5-semialdehyde and phosphate. The product spontaneously undergoes cyclization to form 1-pyrroline-5-carboxylate. This Magnetococcus marinus (strain ATCC BAA-1437 / JCM 17883 / MC-1) protein is Gamma-glutamyl phosphate reductase.